Consider the following 164-residue polypeptide: Bacterial ferritin (164 aa).

The 147-residue stretch at 1–147 folds into the Ferritin-like diiron domain; sequence MKGKKSVISR…QQLGLIARMG (147 aa). The Fe cation site is built by Glu18, Glu51, His54, Glu94, Glu129, and His132.

Belongs to the bacterioferritin family. Heterooligomer of 24 subunits, arranged as 12 dimers, that are packed together to form an approximately spherical molecule with a central cavity, in which large amounts of iron can be deposited.

It carries out the reaction 4 Fe(2+) + O2 + 4 H(+) = 4 Fe(3+) + 2 H2O. The catalysed reaction is Fe(2+)(in) = Fe(2+)(out). In terms of biological role, iron-storage protein, whose ferroxidase center binds Fe(2+), oxidizes it using dioxygen to Fe(3+), and participates in the subsequent Fe(3+) oxide mineral core formation within the central cavity of the BFR protein shell. This is Bacterial ferritin from Paramagnetospirillum magnetotacticum (Aquaspirillum magnetotacticum).